The primary structure comprises 278 residues: Small ribosomal subunit protein uS3 (278 aa).

One can recognise a KH type-2 domain in the interval 39 to 107 (LRKAISKKYV…KVQLNIVEIS (69 aa)). The disordered stretch occupies residues 255–278 (AEIPAEEKPKRVVKKAENITKEEE).

The protein belongs to the universal ribosomal protein uS3 family. Part of the 30S ribosomal subunit. Forms a tight complex with proteins S10 and S14.

Its function is as follows. Binds the lower part of the 30S subunit head. Binds mRNA in the 70S ribosome, positioning it for translation. The sequence is that of Small ribosomal subunit protein uS3 from Dehalococcoides mccartyi (strain CBDB1).